Consider the following 364-residue polypeptide: tRNA 2-selenouridine synthase (364 aa).

A Rhodanese domain is found at 14–137 (LLADTPLIDV…LRQTAIQATW (124 aa)). The active-site S-selanylcysteine intermediate is Cys97.

This sequence belongs to the SelU family. As to quaternary structure, monomer.

The catalysed reaction is 5-methylaminomethyl-2-thiouridine(34) in tRNA + selenophosphate + (2E)-geranyl diphosphate + H2O + H(+) = 5-methylaminomethyl-2-selenouridine(34) in tRNA + (2E)-thiogeraniol + phosphate + diphosphate. It catalyses the reaction 5-methylaminomethyl-2-thiouridine(34) in tRNA + (2E)-geranyl diphosphate = 5-methylaminomethyl-S-(2E)-geranyl-thiouridine(34) in tRNA + diphosphate. The enzyme catalyses 5-methylaminomethyl-S-(2E)-geranyl-thiouridine(34) in tRNA + selenophosphate + H(+) = 5-methylaminomethyl-2-(Se-phospho)selenouridine(34) in tRNA + (2E)-thiogeraniol. It carries out the reaction 5-methylaminomethyl-2-(Se-phospho)selenouridine(34) in tRNA + H2O = 5-methylaminomethyl-2-selenouridine(34) in tRNA + phosphate. Functionally, involved in the post-transcriptional modification of the uridine at the wobble position (U34) of tRNA(Lys), tRNA(Glu) and tRNA(Gln). Catalyzes the conversion of 2-thiouridine (S2U-RNA) to 2-selenouridine (Se2U-RNA). Acts in a two-step process involving geranylation of 2-thiouridine (S2U) to S-geranyl-2-thiouridine (geS2U) and subsequent selenation of the latter derivative to 2-selenouridine (Se2U) in the tRNA chain. The protein is tRNA 2-selenouridine synthase of Salmonella heidelberg (strain SL476).